The sequence spans 482 residues: MGLLAYLLVVLLILNVFFAAVTVFLERRDTSATWAWLLVLTFVPIFGFIIYLIFGRKLSGKKIFDWKGQEKIGIQESTANQIEMIRQKEFPFSDSNVKKHRDLIYLLLVNDGAILTQDNEVELFIDGHEKFDALIADIEKAKDHIHLIYYIFHSDELGNRLMRVLERKAAEGLNVKIIYDAMGSRTTKKSFFRTFEKNGGLVRPFFPSKLPLINFRLNYRNHRKLAIIDGDISYIGGFNIGDEYLGLSKKFGYWRDTHLRVHGKAVYAMQTRFIMDWNSASSTNKIDYKPRYFPTFHGKGHTSMQIVSSGPDSEWQQIKNGYIKMINAAKKTIYLQSPYFIPDASLLEAIKIAALSGVDVRVMIPNKPDHAFVYRATTNYAGELMETGAKIFIYDNGFIHAKTLVVDGEIASVGTANMDFRSFRLNFEVNAFIYEKKMVQKLEDAFLEDILKSYQLTPELYAKRSLWIKFKEAVSRLLSPIL.

2 helical membrane passes run 4-24 and 34-54; these read LAYL…VTVF and WAWL…YLIF. 2 consecutive PLD phosphodiesterase domains span residues 217–244 and 395–422; these read LNYR…GDEY and DNGF…DFRS. Residues His-222, Lys-224, Asp-229, His-400, Lys-402, and Asp-407 contribute to the active site.

The protein belongs to the phospholipase D family. Cardiolipin synthase subfamily.

Its subcellular location is the cell membrane. The catalysed reaction is 2 a 1,2-diacyl-sn-glycero-3-phospho-(1'-sn-glycerol) = a cardiolipin + glycerol. Its function is as follows. Catalyzes the reversible phosphatidyl group transfer from one phosphatidylglycerol molecule to another to form cardiolipin (CL) (diphosphatidylglycerol) and glycerol. This chain is Cardiolipin synthase (cls), found in Listeria welshimeri serovar 6b (strain ATCC 35897 / DSM 20650 / CCUG 15529 / CIP 8149 / NCTC 11857 / SLCC 5334 / V8).